A 296-amino-acid polypeptide reads, in one-letter code: GTP-binding protein GEM (296 aa).

Disordered stretches follow at residues 1 to 20 and 37 to 68; these read MTLNNVTMRQGTVGMQPQQQ and PHQYSHRNRHSATPEDHCRRSWSSDSTDSVIS. Positions 57–68 are enriched in low complexity; sequence SWSSDSTDSVIS. GTP contacts are provided by residues 82-89 and 191-194; these read GEQGVGKS and NKSD. The interval 266–285 is calmodulin-binding; the sequence is ARRFWGKIVAKNNKNMAFKL.

This sequence belongs to the small GTPase superfamily. RGK family. Interacts with calmodulin in a Ca(2+)-dependent manner. Binds ROCK1. In terms of processing, phosphorylated on tyrosine residues. In terms of tissue distribution, most abundant in thymus, spleen, kidney, lung, and testis. Less abundant in heart, brain, liver and skeletal muscle.

It localises to the cell membrane. In terms of biological role, could be a regulatory protein, possibly participating in receptor-mediated signal transduction at the plasma membrane. Has guanine nucleotide-binding activity but undetectable intrinsic GTPase activity. The chain is GTP-binding protein GEM (GEM) from Homo sapiens (Human).